Consider the following 578-residue polypeptide: Protein RIK (578 aa).

The interval 1-34 (MTEDNDEARVPLSDSSTTNDASRTRQRRKRKWDK) is disordered. The region spanning 206 to 273 (SSNVAARIRG…KSIDDAKRLA (68 aa)) is the KH domain. The span at 413 to 425 (ATSLSIPSDNASN) shows a compositional bias: polar residues. Positions 413 to 578 (ATSLSIPSDN…DPDEPLTTRS (166 aa)) are disordered. Residues 472 to 492 (PPSPRSVMPPPPPKTIAPPPS) are compositionally biased toward pro residues. 2 stretches are compositionally biased toward low complexity: residues 493 to 503 (KTMSPPSSKSM) and 510 to 521 (SKTMSPLSSKSM). The segment covering 560–572 (YGDDEDDDDDPDE) has biased composition (acidic residues).

Interacts with AS1. As to expression, expressed in vegetative tissues.

The protein localises to the nucleus. In Arabidopsis thaliana (Mouse-ear cress), this protein is Protein RIK (RIK).